Consider the following 90-residue polypeptide: MEIKGCERVLTTHTPPLKTVCFGLALASLINKGCVLTFSLEWQKQICILQRRRGFGYSLANRQVTKRQWTPLGSLWLSIAHLCSSSCCRM.

The sequence is that of Early nodulin-36A from Glycine max (Soybean).